Reading from the N-terminus, the 223-residue chain is UPF0441 protein YgiB (223 aa).

The span at 178 to 195 (TVPKTAMAPKPATTTTVT) shows a compositional bias: low complexity. The disordered stretch occupies residues 178-223 (TVPKTAMAPKPATTTTVTRGGFGESVAKQSTLQRSATGTSSRSMGG). Over residues 204-223 (AKQSTLQRSATGTSSRSMGG) the composition is skewed to polar residues.

It belongs to the UPF0441 family.

This chain is UPF0441 protein YgiB, found in Escherichia coli (strain ATCC 8739 / DSM 1576 / NBRC 3972 / NCIMB 8545 / WDCM 00012 / Crooks).